Consider the following 329-residue polypeptide: MVQAKSWTLKKHFEGFPTDGNFELKTTELPPLNNGEVLLEALFLSVDPYMRVAAKKLKEGDRMMGEQVARVVESKNSAFPKGTIVAALLGWTSHSISDGNGLTKLPVEWPDKLPLSLALGTVGMPGLTAYFGLLDICGVKGGETVMVSAAAGAVGSVVGQIAKLKGCKVVGTAGSDEKVAYLKKLGFDVAFNYKTVKSLEEALRTASPDGYDCYFDNVGGEFSNAVILQMKTFGRIAICGAISQYNRTGPCPQGPAPEVVIYQQLRMEGFIVNRWQGEVRQKALTELMNWVSEGKVQCHEYVTEGFEKMPAAFMGMLKGENLGKTIVKA.

Thr18 carries the phosphothreonine modification. NADP(+)-binding positions include 152–155 (GAVG), Lys178, Tyr193, Asn217, 239–245 (CGAISQY), 270–272 (FIV), and Asn321. Residue Lys178 is modified to N6-(2-hydroxyisobutyryl)lysine; alternate. Lys178 is subject to N6-acetyllysine; alternate.

Belongs to the NADP-dependent oxidoreductase L4BD family. As to quaternary structure, monomer or homodimer.

The protein localises to the cytoplasm. The enzyme catalyses 13,14-dihydro-15-oxo-prostaglandin E1 + NADP(+) = 15-oxoprostaglandin E1 + NADPH + H(+). It carries out the reaction 13,14-dihydro-15-oxo-prostaglandin E2 + NADP(+) = 15-oxoprostaglandin E2 + NADPH + H(+). It catalyses the reaction 13,14-dihydro-15-oxo-prostaglandin F1alpha + NADP(+) = 15-oxoprostaglandin F1alpha + NADPH + H(+). The catalysed reaction is 13,14-dihydro-15-oxo-PGF2alpha + NADP(+) = 15-oxoprostaglandin F2alpha + NADPH + H(+). The enzyme catalyses leukotriene B4 + NADP(+) = 12-oxo-leukotriene B4 + NADPH + H(+). It carries out the reaction 20-hydroxy-leukotriene B4 + NADP(+) = 12-oxo-20-hydroxy-leukotriene B4 + NADPH + H(+). It catalyses the reaction 6-trans-leukotriene B4 + NADP(+) = 12-oxo-(5S)-hydroxy-(6E,8E,10E,14Z)-eicosatetraenoate + NADPH + H(+). The catalysed reaction is (5S,12S)-dihydroxy-(6E,10E,12E,14Z)-eicosatetraenoate + NADP(+) = 12-oxo-(5S)-hydroxy-(6E,8E,10E,14Z)-eicosatetraenoate + NADPH + H(+). The enzyme catalyses an n-alkanal + NADP(+) = an alk-2-enal + NADPH + H(+). It carries out the reaction hexanal + NADP(+) = (E)-hex-2-enal + NADPH + H(+). It catalyses the reaction octanal + NADP(+) = (2E)-octenal + NADPH + H(+). The catalysed reaction is decanal + NADP(+) = (2E)-decenal + NADPH + H(+). The enzyme catalyses dodecanal + NADP(+) = (2E)-dodecenal + NADPH + H(+). It carries out the reaction 4-hydroxynonanal + NADP(+) = (E)-4-hydroxynon-2-enal + NADPH + H(+). It catalyses the reaction pentan-2-one + NADP(+) = (E)-pent-3-en-2-one + NADPH + H(+). The catalysed reaction is nonan-2-one + NADP(+) = (3E)-nonen-2-one + NADPH + H(+). NAD(P)H-dependent oxidoreductase involved in metabolic inactivation of pro- and anti-inflammatory eicosanoids: prostaglandins (PG), leukotrienes (LT) and lipoxins (LX). Catalyzes with high efficiency the reduction of the 13,14 double bond of 15-oxoPGs, including 15-oxo-PGE1, 15-oxo-PGE2, 15-oxo-PGF1-alpha and 15-oxo-PGF2-alpha. Catalyzes with lower efficiency the oxidation of the hydroxyl group at C12 of LTB4 and its derivatives, converting them into biologically less active 12-oxo-LTB4 metabolites. Reduces 15-oxo-LXA4 to 13,14 dihydro-15-oxo-LXA4, enhancing neutrophil recruitment at the inflammatory site. Plays a role in metabolic detoxification of alkenals and ketones. Reduces alpha,beta-unsaturated alkenals and ketones, particularly those with medium-chain length, showing highest affinity toward (2E)-decenal and (3E)-3-nonen-2-one. May inactivate 4-hydroxy-2-nonenal, a cytotoxic lipid constituent of oxidized low-density lipoprotein particles. The polypeptide is Prostaglandin reductase 1 (Ptgr1) (Mus musculus (Mouse)).